The following is a 219-amino-acid chain: Protein DMP5 (219 aa).

The disordered stretch occupies residues 1 to 24 (MSALRLRNANTPAPELDELSDQTP). 4 helical membrane passes run 51 to 71 (LSNL…PVFT), 82 to 102 (FLTA…SFTD), 142 to 162 (MRFV…AVAL), and 182 to 202 (VLDI…MVFP).

Belongs to the plant DMP1 protein family.

The protein localises to the endoplasmic reticulum membrane. Involved in membrane remodeling. The polypeptide is Protein DMP5 (Arabidopsis thaliana (Mouse-ear cress)).